Consider the following 83-residue polypeptide: U5-theraphotoxin-Hs1c (83 aa).

The first 21 residues, 1–21 (MKTSMFLTLTGLVLLFVVCYA), serve as a signal peptide directing secretion. Residues 22–49 (SESEEKEFPKELLSSIFAADSDFKVEER) constitute a propeptide that is removed on maturation. 3 disulfide bridges follow: cysteine 51/cysteine 63, cysteine 56/cysteine 68, and cysteine 62/cysteine 75.

It belongs to the neurotoxin 10 (Hwtx-1) family. 51 (Hntx-8) subfamily. Hntx-8 sub-subfamily. Expressed by the venom gland.

The protein localises to the secreted. Its function is as follows. Agglutinates erythrocytes. The polypeptide is U5-theraphotoxin-Hs1c (Cyriopagopus schmidti (Chinese bird spider)).